A 429-amino-acid chain; its full sequence is Adenylosuccinate synthetase (429 aa).

Residues 12–18 (GDEGKGK) and 40–42 (GHT) each bind GTP. Residue D13 is the Proton acceptor of the active site. Positions 13 and 40 each coordinate Mg(2+). IMP is bound by residues 13–16 (DEGK), 38–41 (NAGH), T129, R143, Q223, T238, and R302. The Proton donor role is filled by H41. 298-304 (VVTGRKR) contacts substrate. Residues R304, 330 to 332 (KLD), and 412 to 414 (STS) each bind GTP.

The protein belongs to the adenylosuccinate synthetase family. In terms of assembly, homodimer. Requires Mg(2+) as cofactor.

It localises to the cytoplasm. It catalyses the reaction IMP + L-aspartate + GTP = N(6)-(1,2-dicarboxyethyl)-AMP + GDP + phosphate + 2 H(+). Its pathway is purine metabolism; AMP biosynthesis via de novo pathway; AMP from IMP: step 1/2. In terms of biological role, plays an important role in the de novo pathway of purine nucleotide biosynthesis. Catalyzes the first committed step in the biosynthesis of AMP from IMP. This Bartonella henselae (strain ATCC 49882 / DSM 28221 / CCUG 30454 / Houston 1) (Rochalimaea henselae) protein is Adenylosuccinate synthetase.